The following is a 287-amino-acid chain: Glutamate racemase (287 aa).

Substrate-binding positions include 32-33 (DS) and 64-65 (YG). Catalysis depends on Cys-96, which acts as the Proton donor/acceptor. 97–98 (NT) contacts substrate. The active-site Proton donor/acceptor is Cys-208. 209 to 210 (TH) is a substrate binding site.

Belongs to the aspartate/glutamate racemases family.

It carries out the reaction L-glutamate = D-glutamate. It participates in cell wall biogenesis; peptidoglycan biosynthesis. In terms of biological role, provides the (R)-glutamate required for cell wall biosynthesis. The protein is Glutamate racemase of Yersinia enterocolitica serotype O:8 / biotype 1B (strain NCTC 13174 / 8081).